Consider the following 293-residue polypeptide: Ribosomal protein L11 methyltransferase (293 aa).

S-adenosyl-L-methionine-binding residues include threonine 145, glycine 166, aspartate 188, and asparagine 230.

This sequence belongs to the methyltransferase superfamily. PrmA family.

It localises to the cytoplasm. The catalysed reaction is L-lysyl-[protein] + 3 S-adenosyl-L-methionine = N(6),N(6),N(6)-trimethyl-L-lysyl-[protein] + 3 S-adenosyl-L-homocysteine + 3 H(+). Functionally, methylates ribosomal protein L11. In Escherichia coli O139:H28 (strain E24377A / ETEC), this protein is Ribosomal protein L11 methyltransferase.